A 417-amino-acid chain; its full sequence is NADH-quinone oxidoreductase subunit D (417 aa).

Belongs to the complex I 49 kDa subunit family. In terms of assembly, NDH-1 is composed of 14 different subunits. Subunits NuoB, C, D, E, F, and G constitute the peripheral sector of the complex.

The protein localises to the cell inner membrane. It catalyses the reaction a quinone + NADH + 5 H(+)(in) = a quinol + NAD(+) + 4 H(+)(out). Functionally, NDH-1 shuttles electrons from NADH, via FMN and iron-sulfur (Fe-S) centers, to quinones in the respiratory chain. The immediate electron acceptor for the enzyme in this species is believed to be ubiquinone. Couples the redox reaction to proton translocation (for every two electrons transferred, four hydrogen ions are translocated across the cytoplasmic membrane), and thus conserves the redox energy in a proton gradient. The protein is NADH-quinone oxidoreductase subunit D of Paraburkholderia xenovorans (strain LB400).